The primary structure comprises 78 residues: U7-lycotoxin-Ls1e (78 aa).

The first 22 residues, 1–22 (MKLIIFTGLALLLIVSLIDVEA), serve as a signal peptide directing secretion. Residues 23-26 (QNEG) constitute a propeptide that is removed on maturation.

The protein belongs to the neurotoxin 19 (CSTX) family. 07 (U7-Lctx) subfamily. Contains 4 disulfide bonds. As to expression, expressed by the venom gland.

It localises to the secreted. The polypeptide is U7-lycotoxin-Ls1e (Lycosa singoriensis (Wolf spider)).